The sequence spans 106 residues: 1-deoxy-D-xylulose 5-phosphate reductoisomerase (106 aa).

Aspartate 3 is a binding site for Mn(2+). Serine 4, glutamate 5, serine 29, histidine 52, serine 65, asparagine 70, lysine 71, and glutamate 74 together coordinate 1-deoxy-D-xylulose 5-phosphate. Glutamate 5 lines the Mn(2+) pocket. Glutamate 74 is a Mn(2+) binding site.

Belongs to the DXR family. It depends on Mn(2+) as a cofactor. Requires Mg(2+) as cofactor.

It is found in the plastid. It localises to the chloroplast stroma. It carries out the reaction 2-C-methyl-D-erythritol 4-phosphate + NADP(+) = 1-deoxy-D-xylulose 5-phosphate + NADPH + H(+). It participates in isoprenoid biosynthesis; isopentenyl diphosphate biosynthesis via DXP pathway; isopentenyl diphosphate from 1-deoxy-D-xylulose 5-phosphate: step 1/6. Enzyme of the plastid non-mevalonate pathway for isoprenoid biosynthesis that catalyzes the NADPH-dependent rearrangement and reduction of 1-deoxy-D-xylulose-5-phosphate (DXP) to 2-C-methyl-D-erythritol 4-phosphate (MEP). Required for chloroplast development. In Origanum vulgare (Wild marjoram), this protein is 1-deoxy-D-xylulose 5-phosphate reductoisomerase.